A 915-amino-acid chain; its full sequence is Protein translocase subunit SecA (915 aa).

ATP contacts are provided by residues Gln-87, 105 to 109 (GEGKT), and Asp-512. A compositionally biased stretch (low complexity) spans 849–864 (AAQQQARQAPLPNAPA). The segment at 849–915 (AAQQQARQAP…CHGSRAKDHA (67 aa)) is disordered. The span at 876 to 891 (PEEKVARVAAERHIGR) shows a compositional bias: basic and acidic residues. Zn(2+) is bound by residues Cys-895, Cys-897, Cys-906, and His-907.

Belongs to the SecA family. In terms of assembly, monomer and homodimer. Part of the essential Sec protein translocation apparatus which comprises SecA, SecYEG and auxiliary proteins SecDF-YajC and YidC. Requires Zn(2+) as cofactor.

It is found in the cell inner membrane. Its subcellular location is the cytoplasm. It carries out the reaction ATP + H2O + cellular proteinSide 1 = ADP + phosphate + cellular proteinSide 2.. In terms of biological role, part of the Sec protein translocase complex. Interacts with the SecYEG preprotein conducting channel. Has a central role in coupling the hydrolysis of ATP to the transfer of proteins into and across the cell membrane, serving both as a receptor for the preprotein-SecB complex and as an ATP-driven molecular motor driving the stepwise translocation of polypeptide chains across the membrane. The sequence is that of Protein translocase subunit SecA from Actinobacillus succinogenes (strain ATCC 55618 / DSM 22257 / CCUG 43843 / 130Z).